Here is a 222-residue protein sequence, read N- to C-terminus: Mediator of RNA polymerase II transcription subunit 7 (222 aa).

The segment at 34-55 is disordered; that stretch reads YKEKKAASAKQTAPNNSNGGSE. The segment covering 42–53 has biased composition (polar residues); the sequence is AKQTAPNNSNGG.

It belongs to the Mediator complex subunit 7 family. Component of the Mediator complex, which is composed of at least 21 subunits that form three structurally distinct submodules. The Mediator head module contains MED6, MED8, MED11, SRB4/MED17, SRB5/MED18, ROX3/MED19, SRB2/MED20 and SRB6/MED22, the middle module contains MED1, MED4, NUT1/MED5, MED7, CSE2/MED9, NUT2/MED10, SRB7/MED21 and SOH1/MED31, and the tail module contains MED2, PGD1/MED3, RGR1/MED14, GAL11/MED15 and SIN4/MED16. The head and the middle modules interact directly with RNA polymerase II, whereas the elongated tail module interacts with gene-specific regulatory proteins. MED7 interacts directly with MED1, MED4 and SRB7/MED21.

Its subcellular location is the nucleus. Component of the Mediator complex, a coactivator involved in the regulated transcription of nearly all RNA polymerase II-dependent genes. Mediator functions as a bridge to convey information from gene-specific regulatory proteins to the basal RNA polymerase II transcription machinery. The Mediator complex, having a compact conformation in its free form, is recruited to promoters by direct interactions with regulatory proteins and serves for the assembly of a functional preinitiation complex with RNA polymerase II and the general transcription factors. The Mediator complex unfolds to an extended conformation and partially surrounds RNA polymerase II, specifically interacting with the unphosphorylated form of the C-terminal domain (CTD) of RNA polymerase II. The Mediator complex dissociates from the RNA polymerase II holoenzyme and stays at the promoter when transcriptional elongation begins. This chain is Mediator of RNA polymerase II transcription subunit 7 (MED7), found in Saccharomyces cerevisiae (strain ATCC 204508 / S288c) (Baker's yeast).